The following is a 272-amino-acid chain: Endoplasmic reticulum resident protein 27 (272 aa).

A signal peptide spans 1-25 (MEAMPSRCLFLLFLSTCKLSPEVVA). One can recognise a Thioredoxin domain in the interval 38 to 151 (EPMRLTDVQA…LVTEYNAITA (114 aa)). N99 is a glycosylation site (N-linked (GlcNAc...) asparagine). The tract at residues 229 to 232 (DKWD) is PDIA3-binding site. A Prevents secretion from ER motif is present at residues 269–272 (KVEL).

It belongs to the protein disulfide isomerase family. In terms of assembly, interacts with PDIA3.

It is found in the endoplasmic reticulum lumen. Specifically binds unfolded proteins and may recruit protein disulfide isomerase PDIA3 to unfolded substrates. Binds protein substrates via a hydrophobic pocket in the C-terminal domain. May play a role in the unfolded stress response. This chain is Endoplasmic reticulum resident protein 27 (ERP27), found in Bos taurus (Bovine).